Consider the following 443-residue polypeptide: Anthocyanidin 3-O-glucoside 5-O-glucosyltransferase 2 (443 aa).

Residues 1–22 (MVRRRVLLATFPAQGHINPALQ) form the signal peptide. Catalysis depends on His16, which acts as the Proton acceptor. His16 is an an anthocyanidin binding site. UDP-alpha-D-glucose is bound by residues Gln340, His355, Trp358, Asn359, Ser360, Glu363, Asp379, and Gln380.

The protein belongs to the UDP-glycosyltransferase family.

It carries out the reaction an anthocyanidin 3-O-beta-D-glucoside + UDP-alpha-D-glucose = an anthocyanidin 3,5-di-O-beta-D-glucoside + UDP + 2 H(+). The protein operates within pigment biosynthesis; anthocyanin biosynthesis. Functionally, catalyzes the glucosylation at the O-5 position of anthocyanidin 3-glucosides to form anthocyanidin 3,5-di-O-glucosides using UDP-glucose as sugar donor. Anthocyanidin 3,5-di-O-glucosides are molecules that are responsible for pigmentation. Also acts on anthocyanidin 3-O-(6-O-malonylglucoside). Much less active with hydroxycinnamoylglucose derivatives. No activity in the absence of the 3-O-glucoside group. In Perilla frutescens (Beefsteak mint), this protein is Anthocyanidin 3-O-glucoside 5-O-glucosyltransferase 2 (PF3R6).